The chain runs to 254 residues: uncharacterized protein (254 aa).

It belongs to the methyltransferase superfamily.

This is an uncharacterized protein from Mycobacterium bovis (strain ATCC BAA-935 / AF2122/97).